The primary structure comprises 93 residues: YcgL domain-containing protein Shew_2183 (93 aa).

One can recognise a YcgL domain in the interval 1-85; the sequence is MICAVYKSRL…PPVNLLEEYK (85 aa).

This Shewanella loihica (strain ATCC BAA-1088 / PV-4) protein is YcgL domain-containing protein Shew_2183.